We begin with the raw amino-acid sequence, 1027 residues long: Transient-receptor-potential-like protein (1027 aa).

Residues 1 to 22 (MTKEGMLSAAGRRFSRCAPSPR) are disordered. ANK repeat units lie at residues 85 to 115 (MGRT…RIGN), 117 to 141 (LLCA…ITRE), and 163 to 192 (SDIS…SIEK). The next 6 membrane-spanning stretches (helical) occupy residues 355–375 (FFLY…YILM), 391–411 (FFYY…ATFE), 473–493 (FLMI…YYIF), 516–536 (VAEA…IYLF), 559–579 (FCFI…QLYW), and 640–660 (MFIM…IAMM). Disordered regions lie at residues 825–929 (KRDI…TYTS) and 1008–1027 (ENVK…NVEK). Over residues 855 to 874 (EESEEDDKSDETSSTDEEAD) the composition is skewed to acidic residues. The span at 910–923 (RASEADSKLPDRPL) shows a compositional bias: basic and acidic residues. Positions 1008-1017 (ENVKSPSPAS) are enriched in polar residues.

This sequence belongs to the transient receptor (TC 1.A.4) family. STrpC subfamily.

It localises to the membrane. Its function is as follows. Could mediate calcium entry and form a calcium permeant channel. This is Transient-receptor-potential-like protein (trp-1) from Caenorhabditis elegans.